The primary structure comprises 342 residues: Nucleoid-associated protein Spea_1765 (342 aa).

The protein belongs to the YejK family.

Its subcellular location is the cytoplasm. It localises to the nucleoid. In Shewanella pealeana (strain ATCC 700345 / ANG-SQ1), this protein is Nucleoid-associated protein Spea_1765.